Here is a 400-residue protein sequence, read N- to C-terminus: CinA-like protein (400 aa).

This sequence belongs to the CinA family.

The protein is CinA-like protein of Escherichia coli (strain SMS-3-5 / SECEC).